The sequence spans 154 residues: Myoglobin (154 aa).

Positions G2–K148 constitute a Globin domain. S4 bears the Phosphoserine mark. Position 68 is a phosphothreonine (T68). H94 is a binding site for heme b.

It belongs to the globin family. As to quaternary structure, monomeric.

Its subcellular location is the cytoplasm. It localises to the sarcoplasm. The enzyme catalyses Fe(III)-heme b-[protein] + nitric oxide + H2O = Fe(II)-heme b-[protein] + nitrite + 2 H(+). It catalyses the reaction H2O2 + AH2 = A + 2 H2O. Monomeric heme protein which primary function is to store oxygen and facilitate its diffusion within muscle tissues. Reversibly binds oxygen through a pentacoordinated heme iron and enables its timely and efficient release as needed during periods of heightened demand. Depending on the oxidative conditions of tissues and cells, and in addition to its ability to bind oxygen, it also has a nitrite reductase activity whereby it regulates the production of bioactive nitric oxide. Under stress conditions, like hypoxia and anoxia, it also protects cells against reactive oxygen species thanks to its pseudoperoxidase activity. This chain is Myoglobin (MB), found in Loxodonta africana (African elephant).